The primary structure comprises 4427 residues: Dynein axonemal heavy chain 2 (4427 aa).

The disordered stretch occupies residues 1-73 (MSSKAEKKQR…AQSEESVEPE (73 aa)). A stem region spans residues 1 to 1764 (MSSKAEKKQR…VIRQTNTQFQ (1764 aa)). Residues 14–23 (RGSSQASWSG) are compositionally biased toward polar residues. Basic and acidic residues predominate over residues 50 to 59 (LPKEEPEPRL). Residues 1404 to 1439 (EDNQVALSTMKASRFVKAFEKDVDHWERCLSLILEV) form a TPR 1 repeat. AAA regions lie at residues 1765-1986 (YNYE…LLRY), 2046-2273 (ETVE…DNCK), 2378-2625 (RYPP…VFQG), and 2722-2974 (EYNL…LRRH). Residues 1803 to 1810 (GPAGTGKT), 2084 to 2091 (GCTGSGKT), and 2416 to 2423 (GPVGTGKT) each bind ATP. The TPR 2 repeat unit spans residues 2721-2754 (NEYNLSPSVVPMQLVLFREAIEHITRIVRVIGQP). An ATP-binding site is contributed by 2762–2769 (GIGGSGRQ). The stalk stretch occupies residues 2989–3272 (YKKLLGEKRQ…EELRKKSEEM (284 aa)). The stretch at 3012-3049 (FKIDETREKVQVMSLELEDAKKKVAEFQKQCEEYLVII) forms a coiled coil. The TPR 3 repeat unit spans residues 3072–3105 (VEEIKCQALADNAQKDLEEALPALEEAMRALESL). 2 coiled-coil regions span residues 3216–3304 (KRIR…EEDL) and 3523–3567 (VRKE…GSLL). AAA regions lie at residues 3358–3588 (LCNP…EVTE) and 3804–4023 (VTSF…LLSL). TPR repeat units lie at residues 4072–4104 (STPF…LLPG) and 4105–4140 (MDPP…QPQI).

Belongs to the dynein heavy chain family. In terms of assembly, part of the axonemal inner dynein arm complex that consists of at least two heavy chains and a number of intermediate and light chains. Interacts with DNAI4. In terms of tissue distribution, expressed primarily in trachea and testis, 2 tissues containing axonemal structures. Also expressed in lung. Expressed in spermatozoa (at protein level).

The protein localises to the cytoplasm. It localises to the cytoskeleton. Its subcellular location is the cilium axoneme. It is found in the flagellum axoneme. As part of the axonemal inner dynein arm complex plays a central role in ciliary beat. Expressed in sperm flagellum, it is required for sperm motility. Dyneins are microtubule-based molecular motors possessing ATPase activities that can convert the chemical energy of ATP into relative sliding between adjacent microtubule doublets to generate ciliary bending. This Homo sapiens (Human) protein is Dynein axonemal heavy chain 2.